The following is a 125-amino-acid chain: U-scoloptoxin(05)-Er1a (125 aa).

The signal sequence occupies residues 1-20 (MLSLGVSIFLLVFLIPENSG).

Belongs to the scoloptoxin-05 family. In terms of processing, contains 4 disulfide bonds. As to expression, expressed by the venom gland.

The protein localises to the secreted. This Ethmostigmus rubripes (Giant centipede) protein is U-scoloptoxin(05)-Er1a.